The following is a 98-amino-acid chain: DNA-binding protein Fis (98 aa).

The segment at residues 74–93 (QTRAATMMGINRGTLRKKLK) is a DNA-binding region (H-T-H motif).

The protein belongs to the transcriptional regulatory Fis family. As to quaternary structure, homodimer.

Its function is as follows. Activates ribosomal RNA transcription. Plays a direct role in upstream activation of rRNA promoters. This is DNA-binding protein Fis from Vibrio parahaemolyticus serotype O3:K6 (strain RIMD 2210633).